The sequence spans 571 residues: MKAAYDCRATKRACSDRKVLILGTNWANPQSGTMEKITISIVNDKATGNKRNIEEEADESPPPKKLRSAVFLCSTPSSAPHCSRDVDVFDEFDDTILERSEDESDSPLHMTLVQIEELLEGDSDYAAEPPGWEEESDTVLQELAVPNADGSQRNIVEFRNLNSPLVEEQSDSSHTLTEETVCSQDTSNYAAMAPSPCWSSISTAEQNGEAGDNVLSVCPITSPVLHKNEVNRGSVQDCSEVCNDSDICSTLSSSHLPGDLKVVDEISEDSDIPFDGDIDELLTLSPGDTTSEDEDNKITSESTPASSELESVPLVHSHTEAIYKTPSSLQCPVTFTASTDPSNLSQLSVSSVTAINGQNNSNKVPLPPSDTAPGPQLPADPCSQSSKVLKVEPKENKVIKETGFEQGEKSCAAPLDHTVKENLGQTSKEQVVVSIGCKKKVKPSQLQQKKLGTLPTKPQAACRPQISNAELEKNRNIYRDRVMMHLEVHNIPGEPNYELATLLNETSRENPTWQHPSDYTRRNYYVRKQPVPCSLNDWVMRNGGPAIERFHGLPCTFQRSPMPGVLPTGPS.

A compositionally biased stretch (acidic residues) spans serine 270–glutamate 280. Disordered stretches follow at residues serine 270 to valine 312 and asparagine 356 to serine 385. Residues threonine 299–leucine 309 show a composition bias toward polar residues. Positions proline 365–proline 378 are enriched in pro residues.

The protein resides in the nucleus. The sequence is that of S100P-binding protein (s100pbp) from Xenopus tropicalis (Western clawed frog).